The chain runs to 368 residues: GLABROUS1 enhancer-binding protein-like (368 aa).

The segment at 1 to 123 (MAPKKAEEVV…TSDTEHVKKP (123 aa)) is disordered. A compositionally biased stretch (acidic residues) spans 17-31 (SEEEESGSSGEESES). The segment covering 35–47 (VPKKVESSQKPES) has biased composition (basic and acidic residues). A compositionally biased stretch (polar residues) spans 84 to 97 (TSGSAATVPESSTA). Residues 100–123 (PLKEAAPEAIKKQKTSDTEHVKKP) are compositionally biased toward basic and acidic residues.

It belongs to the GeBP family. Mono-, di- and oligomers. Associated with the Mediator complex. Interacts with MED6. Interacts with MED10A, MED28 and MED32. Interacts with DEK3.

It is found in the nucleus. Transcription factor that binds promoters containing the CryR2 element, 5'-ACATAWCT-3'. The DNA-binding activity is decreased upon direct physical interaction with the mediator subunits and is modulated by redox conditions. The oxidized protein is the preferential binding form. The protein is GLABROUS1 enhancer-binding protein-like of Arabidopsis thaliana (Mouse-ear cress).